The sequence spans 607 residues: UvrABC system protein C (607 aa).

Positions Thr19 to Ile97 constitute a GIY-YIG domain. The region spanning Glu205–Ile240 is the UVR domain.

Belongs to the UvrC family. Interacts with UvrB in an incision complex.

It localises to the cytoplasm. Its function is as follows. The UvrABC repair system catalyzes the recognition and processing of DNA lesions. UvrC both incises the 5' and 3' sides of the lesion. The N-terminal half is responsible for the 3' incision and the C-terminal half is responsible for the 5' incision. The protein is UvrABC system protein C of Dichelobacter nodosus (strain VCS1703A).